Consider the following 258-residue polypeptide: Imidazole glycerol phosphate synthase subunit HisF (258 aa).

Catalysis depends on residues D11 and D130.

Belongs to the HisA/HisF family. In terms of assembly, heterodimer of HisH and HisF.

It is found in the cytoplasm. The enzyme catalyses 5-[(5-phospho-1-deoxy-D-ribulos-1-ylimino)methylamino]-1-(5-phospho-beta-D-ribosyl)imidazole-4-carboxamide + L-glutamine = D-erythro-1-(imidazol-4-yl)glycerol 3-phosphate + 5-amino-1-(5-phospho-beta-D-ribosyl)imidazole-4-carboxamide + L-glutamate + H(+). Its pathway is amino-acid biosynthesis; L-histidine biosynthesis; L-histidine from 5-phospho-alpha-D-ribose 1-diphosphate: step 5/9. Functionally, IGPS catalyzes the conversion of PRFAR and glutamine to IGP, AICAR and glutamate. The HisF subunit catalyzes the cyclization activity that produces IGP and AICAR from PRFAR using the ammonia provided by the HisH subunit. This chain is Imidazole glycerol phosphate synthase subunit HisF, found in Bradyrhizobium sp. (strain ORS 278).